Consider the following 822-residue polypeptide: AP-1 complex subunit gamma-1 (822 aa).

Over residues 593–604 (NGPSEIVQTNGE) the composition is skewed to polar residues. A disordered region spans residues 593–627 (NGPSEIVQTNGETEPAPLETKPPPSGPQPTSQAND). In terms of domain architecture, GAE spans 702–817 (PGIPSITAYS…QDLAEVNNFP (116 aa)).

Belongs to the adaptor complexes large subunit family. In terms of assembly, adaptor protein complex 1 (AP-1) is a heterotetramer composed of two large adaptins (gamma-type subunit AP1G1 and beta-type subunit AP1B1), a medium adaptin (mu-type subunit AP1M1 or AP1M2) and a small adaptin (sigma-type subunit AP1S1 or AP1S2 or AP1S3). Interacts (via GAE domain) with RABEP1. Interacts with EPS15. Interacts with SYNRG/gamma-synergin. Interacts (via GAE domain) with AP1AR (via coiled-coil domain). Interacts with CLN3 (via dileucine motif); this interaction facilitates lysosomal targeting. Interacts (via GAE domain) with AFTPH/aftiphilin; the interaction is required to recruit AFTPH/aftiphilin to the perinuclear region of the cell. In terms of tissue distribution, widely expressed.

The protein localises to the golgi apparatus. It is found in the cytoplasmic vesicle. Its subcellular location is the clathrin-coated vesicle membrane. It localises to the cytoplasm. The protein resides in the perinuclear region. The protein localises to the clathrin-coated vesicle. It is found in the membrane. Its subcellular location is the clathrin-coated pit. Its function is as follows. Subunit of clathrin-associated adaptor protein complex 1 that plays a role in protein sorting in the late-Golgi/trans-Golgi network (TGN) and/or endosomes. The AP complexes mediate both the recruitment of clathrin to membranes and the recognition of sorting signals within the cytosolic tails of transmembrane cargo molecules. In association with AFTPH/aftiphilin in the aftiphilin/p200/gamma-synergin complex, involved in the trafficking of transferrin from early to recycling endosomes, and the membrane trafficking of furin and the lysosomal enzyme cathepsin D between the trans-Golgi network (TGN) and endosomes. This Mus musculus (Mouse) protein is AP-1 complex subunit gamma-1 (Ap1g1).